Here is a 192-residue protein sequence, read N- to C-terminus: Interleukin-18 (192 aa).

The propeptide occupies 1–35 (MAAEPEDNCISFVEMKFINNTLYFVAENDEDLESD).

This sequence belongs to the IL-1 family. Forms a ternary complex with ligand-binding receptor subunit IL18R1 and signaling receptor subunit IL18RAP at the plasma membrane. Mature IL18 first binds to IL18R1 forming a low affinity binary complex, which then interacts with IL18RAP to form a high affinity ternary complex that signals inside the cell. Interacts with cargo receptor TMED10; the interaction mediates the translocation from the cytoplasm into the ERGIC (endoplasmic reticulum-Golgi intermediate compartment) and thereby secretion. Post-translationally, the pro-IL-18 precursor is processed by CASP1, CASP4 or CASP5 to yield its mature, active form. The pro-IL-18 precursor features autoinhibitory interactions between the propeptide and the post-cleavage-site region, preventing recognition by the IL18R1 receptor. Processing by CASP1, CASP4 or CASP5 induces conformational changes to generate critical receptor-binding sites. The mature form is then secreted and released in the extracellular milieu by passing through the gasdermin-D (GSDMD) pore. In contrast, cleavage by CASP3 inactivates IL18.

The protein localises to the cytoplasm. It is found in the cytosol. The protein resides in the secreted. Functionally, pro-inflammatory cytokine primarily involved in epithelial barrier repair, polarized T-helper 1 (Th1) cell and natural killer (NK) cell immune responses. Upon binding to IL18R1 and IL18RAP, forms a signaling ternary complex which activates NF-kappa-B, triggering synthesis of inflammatory mediators. Synergizes with IL12/interleukin-12 to induce IFNG synthesis from T-helper 1 (Th1) cells and natural killer (NK) cells. Involved in transduction of inflammation downstream of pyroptosis: its mature form is specifically released in the extracellular milieu by passing through the gasdermin-D (GSDMD) pore. The protein is Interleukin-18 (IL18) of Sus scrofa (Pig).